Consider the following 319-residue polypeptide: Cell surface A33 antigen (319 aa).

Positions 1–21 (MVGKMWPVLWTLCAVRVTVDA) are cleaved as a signal peptide. Positions 22-134 (ISVETPQDVL…LEGNTKSRVR (113 aa)) constitute an Ig-like V-type domain. Topologically, residues 22–235 (ISVETPQDVL…VAVRSPSMNV (214 aa)) are extracellular. 3 cysteine pairs are disulfide-bonded: cysteine 43–cysteine 117, cysteine 146–cysteine 222, and cysteine 162–cysteine 211. Residues asparagine 112, asparagine 200, and asparagine 223 are each glycosylated (N-linked (GlcNAc...) asparagine). The Ig-like C2-type domain maps to 140 to 227 (PPSKPECGIE…GTQFCNITVA (88 aa)). Residues 236–256 (ALYVGIAVGVVAALIIIGIII) form a helical membrane-spanning segment. Residues 257–319 (YCCCCRGKDD…GRESPDHLDQ (63 aa)) lie on the Cytoplasmic side of the membrane. Basic and acidic residues-rich tracts occupy residues 267-295 (NTED…SRER) and 303-319 (QEEQ…HLDQ). The disordered stretch occupies residues 267 to 319 (NTEDKEDARPNREAYEEPPEQLRELSREREEEDDYRQEEQRSTGRESPDHLDQ).

Post-translationally, N-glycosylated, contains approximately 8 kDa of N-linked carbohydrate. In terms of processing, palmitoylated. As to expression, expressed in normal gastrointestinal epithelium and in 95% of colon cancers.

It localises to the membrane. May play a role in cell-cell recognition and signaling. The protein is Cell surface A33 antigen (GPA33) of Homo sapiens (Human).